The chain runs to 185 residues: HTH-type transcriptional repressor OpcR (185 aa).

Residues 49–73 (LSELSEATGMSKTRMSQVVREMIDA) constitute a DNA-binding region (H-T-H motif).

Belongs to the GbsR family.

Is not choline-responsive. Negatively regulates the transcription of the opuC operon. In the absence of GbsR, is also a negative regulator of the opuB operon. Binds to an inverted repeat in the promoter region of the operons. This chain is HTH-type transcriptional repressor OpcR (opcR), found in Bacillus subtilis (strain 168).